A 499-amino-acid polypeptide reads, in one-letter code: MTDNLDKNYIIALDQGTTSSRAIIFDRDANVVGTSQREFAQHYPQAGWVEHDPMEIFATQSATMVEALAQAGISHAQVAAIGITNQRETTVVWDKETGRPVYNAIVWQCRRSTEICAQLKRDGHEQYIREATGLVTDPYFSGTKLKWILDNVEGARERAERGELLFGTIDTWLIWKFSGGKVHVTDYTNASRTLMFNIHTLHWDEKLLDILGIPRQMLPEVRPSSEVYGKTKSGIDIAGIAGDQQSALFGQMCVEPGQAKNTYGTGCFLLMNTGDKAVKSSHGLLTTIACGPRGEVAYALEGAVFNGGSTVQWLRDELKIVNDAHDTEYFASKVKDSNGVYLVPAFTGLGAPYWDPYARGALFGLTRGVKVDHIIRAALESIAYQTRDVLDAMQQDCGERLSELRVDGGAVANNFLMQFQADILGTCVERPKMRETTALGAAYLAGLACGFWSGLDELRDKAIIEREFSPQLAEAEKEKLYKGWRKAVDRTRDWEDHDA.

T17 is a binding site for ADP. Residues T17, T18, and S19 each coordinate ATP. Position 17 (T17) interacts with sn-glycerol 3-phosphate. R21 is an ADP binding site. The sn-glycerol 3-phosphate site is built by R87, E88, Y139, and D243. R87, E88, Y139, D243, and Q244 together coordinate glycerol. 2 residues coordinate ADP: T265 and G308. The ATP site is built by T265, G308, Q312, and G409. The ADP site is built by G409 and N413.

The protein belongs to the FGGY kinase family.

The catalysed reaction is glycerol + ATP = sn-glycerol 3-phosphate + ADP + H(+). It functions in the pathway polyol metabolism; glycerol degradation via glycerol kinase pathway; sn-glycerol 3-phosphate from glycerol: step 1/1. Its activity is regulated as follows. Inhibited by fructose 1,6-bisphosphate (FBP). Functionally, key enzyme in the regulation of glycerol uptake and metabolism. Catalyzes the phosphorylation of glycerol to yield sn-glycerol 3-phosphate. This is Glycerol kinase from Pseudomonas entomophila (strain L48).